A 385-amino-acid polypeptide reads, in one-letter code: Cytochrome b (385 aa).

4 helical membrane passes run 32 to 52, 76 to 98, 113 to 133, and 179 to 199; these read FGSL…TLAM, WLVR…LHIG, TWAI…LGYV, and FFAL…MHLI. Heme b-binding residues include histidine 82 and histidine 96. Residues histidine 183 and histidine 197 each coordinate heme b. Residue histidine 202 participates in a ubiquinone binding. 4 helical membrane-spanning segments follow: residues 226–246, 290–310, 322–342, and 349–369; these read FIFK…IFVF, LLGV…PITD, LSKV…QIGA, and FIEL…VIVP.

This sequence belongs to the cytochrome b family. As to quaternary structure, fungal cytochrome b-c1 complex contains 10 subunits; 3 respiratory subunits, 2 core proteins and 5 low-molecular weight proteins. Cytochrome b-c1 complex is a homodimer. Heme b is required as a cofactor.

It is found in the mitochondrion inner membrane. Functionally, component of the ubiquinol-cytochrome c reductase complex (complex III or cytochrome b-c1 complex) that is part of the mitochondrial respiratory chain. The b-c1 complex mediates electron transfer from ubiquinol to cytochrome c. Contributes to the generation of a proton gradient across the mitochondrial membrane that is then used for ATP synthesis. The chain is Cytochrome b (cob) from Aspergillus tubingensis.